We begin with the raw amino-acid sequence, 368 residues long: Phospho-N-acetylmuramoyl-pentapeptide-transferase (368 aa).

The next 9 membrane-spanning stretches (helical) occupy residues 30–50 (AAAITALLISLMAGPWFIRYL), 72–92 (LPTMGGILIIFSIEVSVFLWA), 98–118 (HVWLVMLAIFWMGLIGFIDDY), 139–159 (ISLGLVIGLYTWFDPAFAVLL), 170–190 (LSIDYGIFYIPIVIFIITAVS), 201–221 (GLASGTTAIVVSALGAFSYLA), 238–258 (GGEIAVVCMAIVMACVGFLWF), 264–286 (EIIMGDTGSLALGSAVAVIALLI), and 345–365 (KIVIRFWIISILFFLTSLMTL).

This sequence belongs to the glycosyltransferase 4 family. MraY subfamily. Mg(2+) serves as cofactor.

Its subcellular location is the cell inner membrane. The catalysed reaction is UDP-N-acetyl-alpha-D-muramoyl-L-alanyl-gamma-D-glutamyl-meso-2,6-diaminopimeloyl-D-alanyl-D-alanine + di-trans,octa-cis-undecaprenyl phosphate = di-trans,octa-cis-undecaprenyl diphospho-N-acetyl-alpha-D-muramoyl-L-alanyl-D-glutamyl-meso-2,6-diaminopimeloyl-D-alanyl-D-alanine + UMP. Its pathway is cell wall biogenesis; peptidoglycan biosynthesis. In terms of biological role, catalyzes the initial step of the lipid cycle reactions in the biosynthesis of the cell wall peptidoglycan: transfers peptidoglycan precursor phospho-MurNAc-pentapeptide from UDP-MurNAc-pentapeptide onto the lipid carrier undecaprenyl phosphate, yielding undecaprenyl-pyrophosphoryl-MurNAc-pentapeptide, known as lipid I. This is Phospho-N-acetylmuramoyl-pentapeptide-transferase from Chlorobium phaeobacteroides (strain DSM 266 / SMG 266 / 2430).